The primary structure comprises 166 residues: Photosystem I assembly protein Ycf3 (166 aa).

TPR repeat units lie at residues 31 to 64, 68 to 101, and 116 to 149; these read AFKY…EEDP, SYIL…NPNL, and GEQA…APNN.

Belongs to the Ycf3 family.

It localises to the cellular thylakoid membrane. In terms of biological role, essential for the assembly of the photosystem I (PSI) complex. May act as a chaperone-like factor to guide the assembly of the PSI subunits. This Acaryochloris marina (strain MBIC 11017) protein is Photosystem I assembly protein Ycf3.